Here is a 406-residue protein sequence, read N- to C-terminus: Acetate kinase (406 aa).

Position 7 (Asn-7) interacts with Mg(2+). Lys-14 is a binding site for ATP. Arg-90 is a binding site for substrate. Residue Asp-147 is the Proton donor/acceptor of the active site. ATP is bound by residues 207-211, 283-285, and 331-335; these read HLGNG, DMR, and GVGEN. Residue Glu-385 coordinates Mg(2+).

Belongs to the acetokinase family. In terms of assembly, homodimer. Requires Mg(2+) as cofactor. Mn(2+) serves as cofactor.

It localises to the cytoplasm. The enzyme catalyses acetate + ATP = acetyl phosphate + ADP. It participates in metabolic intermediate biosynthesis; acetyl-CoA biosynthesis; acetyl-CoA from acetate: step 1/2. In terms of biological role, catalyzes the formation of acetyl phosphate from acetate and ATP. Can also catalyze the reverse reaction. This is Acetate kinase from Thermosipho africanus (strain TCF52B).